We begin with the raw amino-acid sequence, 386 residues long: Ferrochelatase (386 aa).

Residues His-196 and Glu-277 each coordinate Fe cation.

Belongs to the ferrochelatase family.

It localises to the cytoplasm. It carries out the reaction heme b + 2 H(+) = protoporphyrin IX + Fe(2+). It participates in porphyrin-containing compound metabolism; protoheme biosynthesis; protoheme from protoporphyrin-IX: step 1/1. Catalyzes the ferrous insertion into protoporphyrin IX. The protein is Ferrochelatase of Picosynechococcus sp. (strain ATCC 27264 / PCC 7002 / PR-6) (Agmenellum quadruplicatum).